Here is a 164-residue protein sequence, read N- to C-terminus: NADH-quinone oxidoreductase subunit I (164 aa).

2 consecutive 4Fe-4S ferredoxin-type domains span residues 55 to 85 (LRRYPNGEERCIACKLCEAVCPAQAITIDAE) and 95 to 124 (TRYDIDMTKCIYCGFCEEACPVDAIVEGPN). Cysteine 65, cysteine 68, cysteine 71, cysteine 75, cysteine 104, cysteine 107, cysteine 110, and cysteine 114 together coordinate [4Fe-4S] cluster.

This sequence belongs to the complex I 23 kDa subunit family. NDH-1 is composed of 14 different subunits. Subunits NuoA, H, J, K, L, M, N constitute the membrane sector of the complex. [4Fe-4S] cluster is required as a cofactor.

The protein resides in the cell inner membrane. The enzyme catalyses a quinone + NADH + 5 H(+)(in) = a quinol + NAD(+) + 4 H(+)(out). NDH-1 shuttles electrons from NADH, via FMN and iron-sulfur (Fe-S) centers, to quinones in the respiratory chain. The immediate electron acceptor for the enzyme in this species is believed to be ubiquinone. Couples the redox reaction to proton translocation (for every two electrons transferred, four hydrogen ions are translocated across the cytoplasmic membrane), and thus conserves the redox energy in a proton gradient. This is NADH-quinone oxidoreductase subunit I from Roseobacter denitrificans (strain ATCC 33942 / OCh 114) (Erythrobacter sp. (strain OCh 114)).